The sequence spans 236 residues: Orotidine 5'-phosphate decarboxylase (236 aa).

Residues D14, K36, 63–72 (DLKYHDIPNT), T122, R183, Q192, G212, and R213 each bind substrate. Catalysis depends on K65, which acts as the Proton donor.

This sequence belongs to the OMP decarboxylase family. Type 1 subfamily. As to quaternary structure, homodimer.

It catalyses the reaction orotidine 5'-phosphate + H(+) = UMP + CO2. It participates in pyrimidine metabolism; UMP biosynthesis via de novo pathway; UMP from orotate: step 2/2. Functionally, catalyzes the decarboxylation of orotidine 5'-monophosphate (OMP) to uridine 5'-monophosphate (UMP). The chain is Orotidine 5'-phosphate decarboxylase from Halorhodospira halophila (strain DSM 244 / SL1) (Ectothiorhodospira halophila (strain DSM 244 / SL1)).